Reading from the N-terminus, the 184-residue chain is ATP synthase subunit b, chloroplastic (184 aa).

Residues 29–49 (INIINLGIVIGLLVYLGEGVL) form a helical membrane-spanning segment.

The protein belongs to the ATPase B chain family. F-type ATPases have 2 components, F(1) - the catalytic core - and F(0) - the membrane proton channel. F(1) has five subunits: alpha(3), beta(3), gamma(1), delta(1), epsilon(1). F(0) has four main subunits: a(1), b(1), b'(1) and c(10-14). The alpha and beta chains form an alternating ring which encloses part of the gamma chain. F(1) is attached to F(0) by a central stalk formed by the gamma and epsilon chains, while a peripheral stalk is formed by the delta, b and b' chains.

Its subcellular location is the plastid. The protein resides in the chloroplast thylakoid membrane. Functionally, f(1)F(0) ATP synthase produces ATP from ADP in the presence of a proton or sodium gradient. F-type ATPases consist of two structural domains, F(1) containing the extramembraneous catalytic core and F(0) containing the membrane proton channel, linked together by a central stalk and a peripheral stalk. During catalysis, ATP synthesis in the catalytic domain of F(1) is coupled via a rotary mechanism of the central stalk subunits to proton translocation. Component of the F(0) channel, it forms part of the peripheral stalk, linking F(1) to F(0). The polypeptide is ATP synthase subunit b, chloroplastic (Psilotum nudum (Whisk fern)).